We begin with the raw amino-acid sequence, 1414 residues long: Phenyloxazoline synthase MbtB (1414 aa).

The region spanning 5–78 (TACSEIIRAE…AWSQLVSAGT (74 aa)) is the Carrier 1 domain. Ser39 carries the O-(pantetheine 4'-phosphoryl)serine modification. Positions 96 to 394 (EGEPFPLAPM…SSLLLDVDLT (299 aa)) are condensation/cyclization. An adenylation region spans residues 579–975 (SYAQLRDQAS…RLPGVHAAAA (397 aa)). The Carrier 2 domain maps to 1057 to 1135 (APRTVLQRAL…ALAQLLTGRE (79 aa)). Ser1094 is subject to O-(pantetheine 4'-phosphoryl)serine. The segment at 1188–1413 (GAVLVFPHAG…AVARMVSADV (226 aa)) is thioesterase.

This sequence belongs to the ATP-dependent AMP-binding enzyme family. MbtB subfamily. Requires pantetheine 4'-phosphate as cofactor. 4'-phosphopantetheine is transferred from CoA to a specific serine in each of the two carrier protein domains, leading to their activation from apo to holo forms.

It functions in the pathway siderophore biosynthesis; mycobactin biosynthesis. In terms of biological role, involved in the initial steps of the mycobactin biosynthetic pathway. Putatively couples activated salicylic acid with serine or threonine and cyclizes this precursor to the hydroxyphenyloxazoline ring system present in this class of siderophores. This chain is Phenyloxazoline synthase MbtB (mbtB), found in Mycobacterium bovis (strain ATCC BAA-935 / AF2122/97).